Reading from the N-terminus, the 232-residue chain is Clarin-1 (232 aa).

Residues 8–28 (IIFCMAGVLSFLCALGVVTAV) traverse the membrane as a helical segment. Asparagine 48 carries an N-linked (GlcNAc...) asparagine glycan. 2 helical membrane passes run 101–121 (IILF…FFMY) and 135–155 (LGLY…MILF). N-linked (GlcNAc...) asparagine glycosylation occurs at asparagine 184. A helical membrane pass occupies residues 186–206 (TTSFWVVFICFFVHFLNGLLI).

This sequence belongs to the clarin family.

It is found in the cell membrane. Its function is as follows. May have a role in the excitatory ribbon synapse junctions between hair cells and cochlear ganglion cells and presumably also in analogous synapses within the retina. This chain is Clarin-1 (Clrn1), found in Mus musculus (Mouse).